The primary structure comprises 457 residues: ATP synthase subunit beta (457 aa).

147-154 contacts ATP; that stretch reads GGAGVGKT.

The protein belongs to the ATPase alpha/beta chains family. F-type ATPases have 2 components, CF(1) - the catalytic core - and CF(0) - the membrane proton channel. CF(1) has five subunits: alpha(3), beta(3), gamma(1), delta(1), epsilon(1). CF(0) has three main subunits: a(1), b(2) and c(9-12). The alpha and beta chains form an alternating ring which encloses part of the gamma chain. CF(1) is attached to CF(0) by a central stalk formed by the gamma and epsilon chains, while a peripheral stalk is formed by the delta and b chains.

Its subcellular location is the cell inner membrane. It carries out the reaction ATP + H2O + 4 H(+)(in) = ADP + phosphate + 5 H(+)(out). Its function is as follows. Produces ATP from ADP in the presence of a proton gradient across the membrane. The catalytic sites are hosted primarily by the beta subunits. The sequence is that of ATP synthase subunit beta from Pasteurella multocida (strain Pm70).